Consider the following 435-residue polypeptide: MSEFRQATDAFASNPVESKQEIRNYTMNFGPQHPAAHGVLRLILEMDGETVVRADPHIGLLHRGTEKLAESKPFNQSVPYMDRLDYVSMMCNEHAYVRAIESLMGIEAPERAQYIRTMFDEITRIKNHLMWVGSNALDLGAMAVMLYAFREREELMDVYEAVSGARMHAAYYRPGGVYRDLPDRMPQYKESRWHKGGALKKRNAGREGTMLDFLEEFTNTFPARVDEYETLLTDNRIWKQRTVDVGIISPDLARAWGMTGPMLRGSGIEWDLRKKQPYAKYDAVDFDIPVGTNGDCYDRYLVRVAEMRESNRIIKQCVKWLKANPGPVMVTNFKVAPPSREGMKDDMEALIHHFKLFSEGYCVPAGETYSAVEAPKGEFGCYLMSDGANKPFRVHLRAPGFAHLSSMDAVVRGYLLADVVAMIGTYDLVFGEVDR.

Belongs to the complex I 49 kDa subunit family. As to quaternary structure, NDH-1 is composed of 14 different subunits. Subunits NuoB, C, D, E, F, and G constitute the peripheral sector of the complex.

Its subcellular location is the cell inner membrane. It catalyses the reaction a quinone + NADH + 5 H(+)(in) = a quinol + NAD(+) + 4 H(+)(out). Functionally, NDH-1 shuttles electrons from NADH, via FMN and iron-sulfur (Fe-S) centers, to quinones in the respiratory chain. The immediate electron acceptor for the enzyme in this species is believed to be ubiquinone. Couples the redox reaction to proton translocation (for every two electrons transferred, four hydrogen ions are translocated across the cytoplasmic membrane), and thus conserves the redox energy in a proton gradient. This chain is NADH-quinone oxidoreductase subunit D, found in Xanthomonas euvesicatoria pv. vesicatoria (strain 85-10) (Xanthomonas campestris pv. vesicatoria).